The following is a 72-amino-acid chain: Toxin Acra II-1 (72 aa).

Residues 3–67 form the LCN-type CS-alpha/beta domain; it reads VPGNYPLNTY…VWNAAKNYCK (65 aa). Cystine bridges form between C18–C41, C27–C46, and C31–C48.

This sequence belongs to the long (3 C-C) scorpion toxin superfamily. Sodium channel inhibitor family. Beta subfamily. As to expression, expressed by the venom gland.

Its subcellular location is the secreted. Its function is as follows. Binds to sodium channels (Nav) and affects the channel activation process. The sequence is that of Toxin Acra II-1 from Androctonus crassicauda (Arabian fat-tailed scorpion).